The chain runs to 692 residues: MSCFSHVMNPITGENSWQEREDDYDYHQEVANAGFGDMLHDWERNQKYFAALRKTIKGMRAAGREVHVLDIGTGTGILSMMALKAGADSVTACEAFLPMANCAAKIFTDNGVGDKVQLIRKRSTDIKIGADLDMPQRANLLVAELLDTELIGEGAISIYNHAHAELLTDDALCIPARARCYAQVAQSPLASQWNSLKILPNLDGEALLRPPEQLKSCKGEAALHDVQLSQLPAGTFRLLTEPIEIFQLDFQRKEKREKQREKLVQLQASQPGAAELVFYWWDIQLDDQGEILLSCAPYWAHPELKELSASKEERVPVANVVPWRDHWMQAIYYVPKPPQLATVGQDFYLSCHHDEYSLWFDAMLEAPAKTVRRHTCSCDLHMTYSRSRIGQLNQAIRNKRYLRYLEATIVPKQSNVLVLGNGCMLGLASAALGAASVQLHEPHRFSRRLIDSIVQHNELKNVKYVENVEQLEDTELIALSHVFAEPYFLNAILPWDNFYFGTLLMKLKDKLPEKVEISPCEARIFALPVEFLDLHKIRAPVGSCEGFDLRLFDEMVERSAEQAVSLVEAQPLWEYPSRALAEPQQLLSVDFANFNVDHHLQGSIELTQSGVCNGIALWVDWHLDKTNNPKSIVSTGPSEAVVPGEFVKWDMFVRQGVHFPRKPTDLSGRVAWSTDFKPLLGQLKFGFSQEKR.

2 consecutive SAM-dependent MTase PRMT-type domains span residues 14-359 (ENSW…YSLW) and 368-692 (AKTV…QEKR).

This sequence belongs to the class I-like SAM-binding methyltransferase superfamily. Protein arginine N-methyltransferase family. PRMT7 subfamily.

Functionally, essential arginine methyltransferase that can both catalyze the formation of omega-N monomethylarginine (MMA) and symmetrical dimethylarginine (sDMA). Specifically mediates the symmetrical dimethylation of arginine residues in the small nuclear ribonucleoproteins SmD1 and SmD3. This Drosophila pseudoobscura pseudoobscura (Fruit fly) protein is Protein arginine N-methyltransferase 7 (Art7).